The following is a 281-amino-acid chain: 4-diphosphocytidyl-2-C-methyl-D-erythritol kinase (281 aa).

Lys15 is an active-site residue. 98 to 108 is a binding site for ATP; it reads PTGAGLGGGSS. Asp140 is a catalytic residue.

This sequence belongs to the GHMP kinase family. IspE subfamily.

It carries out the reaction 4-CDP-2-C-methyl-D-erythritol + ATP = 4-CDP-2-C-methyl-D-erythritol 2-phosphate + ADP + H(+). It functions in the pathway isoprenoid biosynthesis; isopentenyl diphosphate biosynthesis via DXP pathway; isopentenyl diphosphate from 1-deoxy-D-xylulose 5-phosphate: step 3/6. In terms of biological role, catalyzes the phosphorylation of the position 2 hydroxy group of 4-diphosphocytidyl-2C-methyl-D-erythritol. The protein is 4-diphosphocytidyl-2-C-methyl-D-erythritol kinase of Neisseria meningitidis serogroup B (strain ATCC BAA-335 / MC58).